A 433-amino-acid polypeptide reads, in one-letter code: Bifunctional protein GlmU (433 aa).

The tract at residues 1-226 is pyrophosphorylase; the sequence is MLSVIILAAG…EECFLGVNSQ (226 aa). UDP-N-acetyl-alpha-D-glucosamine-binding positions include 7 to 10, Lys-21, and 80 to 81; these read LAAG and GT. Asp-106 is a binding site for Mg(2+). Gly-138, Glu-152, Asn-167, and Asn-224 together coordinate UDP-N-acetyl-alpha-D-glucosamine. A Mg(2+)-binding site is contributed by Asn-224. The linker stretch occupies residues 227 to 247; sequence TERAKAEEIMLERLRKNAMDL. Residues 248–433 are N-acetyltransferase; it reads GVVMQLPNSI…NGYFKFFKKP (186 aa). Arg-311 and Lys-328 together coordinate UDP-N-acetyl-alpha-D-glucosamine. Catalysis depends on His-339, which acts as the Proton acceptor. UDP-N-acetyl-alpha-D-glucosamine contacts are provided by Tyr-342 and Asn-353. Residues Ala-356, 362–363, Ser-381, Ser-399, and Arg-416 contribute to the acetyl-CoA site; that span reads NY.

The protein in the N-terminal section; belongs to the N-acetylglucosamine-1-phosphate uridyltransferase family. In the C-terminal section; belongs to the transferase hexapeptide repeat family. As to quaternary structure, homotrimer. The cofactor is Mg(2+).

The protein localises to the cytoplasm. It catalyses the reaction alpha-D-glucosamine 1-phosphate + acetyl-CoA = N-acetyl-alpha-D-glucosamine 1-phosphate + CoA + H(+). The catalysed reaction is N-acetyl-alpha-D-glucosamine 1-phosphate + UTP + H(+) = UDP-N-acetyl-alpha-D-glucosamine + diphosphate. It participates in nucleotide-sugar biosynthesis; UDP-N-acetyl-alpha-D-glucosamine biosynthesis; N-acetyl-alpha-D-glucosamine 1-phosphate from alpha-D-glucosamine 6-phosphate (route II): step 2/2. It functions in the pathway nucleotide-sugar biosynthesis; UDP-N-acetyl-alpha-D-glucosamine biosynthesis; UDP-N-acetyl-alpha-D-glucosamine from N-acetyl-alpha-D-glucosamine 1-phosphate: step 1/1. The protein operates within bacterial outer membrane biogenesis; LPS lipid A biosynthesis. In terms of biological role, catalyzes the last two sequential reactions in the de novo biosynthetic pathway for UDP-N-acetylglucosamine (UDP-GlcNAc). The C-terminal domain catalyzes the transfer of acetyl group from acetyl coenzyme A to glucosamine-1-phosphate (GlcN-1-P) to produce N-acetylglucosamine-1-phosphate (GlcNAc-1-P), which is converted into UDP-GlcNAc by the transfer of uridine 5-monophosphate (from uridine 5-triphosphate), a reaction catalyzed by the N-terminal domain. The protein is Bifunctional protein GlmU of Helicobacter pylori (strain ATCC 700392 / 26695) (Campylobacter pylori).